The following is a 151-amino-acid chain: 3-hydroxyacyl-[acyl-carrier-protein] dehydratase FabZ (151 aa).

Residue histidine 49 is part of the active site.

Belongs to the thioester dehydratase family. FabZ subfamily.

The protein resides in the cytoplasm. It carries out the reaction a (3R)-hydroxyacyl-[ACP] = a (2E)-enoyl-[ACP] + H2O. Involved in unsaturated fatty acids biosynthesis. Catalyzes the dehydration of short chain beta-hydroxyacyl-ACPs and long chain saturated and unsaturated beta-hydroxyacyl-ACPs. In Wolinella succinogenes (strain ATCC 29543 / DSM 1740 / CCUG 13145 / JCM 31913 / LMG 7466 / NCTC 11488 / FDC 602W) (Vibrio succinogenes), this protein is 3-hydroxyacyl-[acyl-carrier-protein] dehydratase FabZ.